Here is a 182-residue protein sequence, read N- to C-terminus: Ribulose bisphosphate carboxylase small subunit, chloroplastic 4 (182 aa).

The transit peptide at Met1–Arg41 directs the protein to the chloroplast.

The protein belongs to the RuBisCO small chain family. As to quaternary structure, heterohexadecamer of 8 large and 8 small subunits.

It localises to the plastid. The protein resides in the chloroplast. Its function is as follows. RuBisCO catalyzes two reactions: the carboxylation of D-ribulose 1,5-bisphosphate, the primary event in carbon dioxide fixation, as well as the oxidative fragmentation of the pentose substrate. Both reactions occur simultaneously and in competition at the same active site. Although the small subunit is not catalytic it is essential for maximal activity. The protein is Ribulose bisphosphate carboxylase small subunit, chloroplastic 4 of Acetabularia peniculus (Green alga).